We begin with the raw amino-acid sequence, 1059 residues long: Carbamoyl phosphate synthase large chain (1059 aa).

The carboxyphosphate synthetic domain stretch occupies residues 1–401; sequence MPKRTDIHKI…ALLKAVASLE (401 aa). Residues Arg-129, Arg-169, Gly-175, Gly-176, Lys-208, Ile-210, Glu-215, Gly-241, Ile-242, His-243, Gln-284, and Glu-298 each coordinate ATP. Residues 133–327 form the ATP-grasp 1 domain; the sequence is KELMQELGEP…IAKLAAKIAV (195 aa). Residues Gln-284, Glu-298, and Asn-300 each coordinate Mg(2+). Mn(2+) is bound by residues Gln-284, Glu-298, and Asn-300. The interval 402 to 546 is oligomerization domain; that stretch reads IDQKDLLSKE…YSTYETENES (145 aa). The carbamoyl phosphate synthetic domain stretch occupies residues 547–929; it reads RRSAKPSVLV…ALYKAFAGAG (383 aa). The ATP-grasp 2 domain maps to 671–861; it reads DQVIKDLNLR…MAQLATKVIL (191 aa). Arg-707, Ala-746, Leu-748, Glu-752, Gly-777, Val-778, His-779, Ser-780, Gln-820, and Glu-832 together coordinate ATP. The Mg(2+) site is built by Gln-820, Glu-832, and Asn-834. Gln-820, Glu-832, and Asn-834 together coordinate Mn(2+). The region spanning 930–1059 is the MGS-like domain; the sequence is MEVPDNGAVL…EMTSFKTTEL (130 aa). Residues 930 to 1059 are allosteric domain; the sequence is MEVPDNGAVL…EMTSFKTTEL (130 aa).

Belongs to the CarB family. In terms of assembly, composed of two chains; the small (or glutamine) chain promotes the hydrolysis of glutamine to ammonia, which is used by the large (or ammonia) chain to synthesize carbamoyl phosphate. Tetramer of heterodimers (alpha,beta)4. Mg(2+) serves as cofactor. The cofactor is Mn(2+).

The enzyme catalyses hydrogencarbonate + L-glutamine + 2 ATP + H2O = carbamoyl phosphate + L-glutamate + 2 ADP + phosphate + 2 H(+). The catalysed reaction is hydrogencarbonate + NH4(+) + 2 ATP = carbamoyl phosphate + 2 ADP + phosphate + 2 H(+). It participates in amino-acid biosynthesis; L-arginine biosynthesis; carbamoyl phosphate from bicarbonate: step 1/1. The protein operates within pyrimidine metabolism; UMP biosynthesis via de novo pathway; (S)-dihydroorotate from bicarbonate: step 1/3. In terms of biological role, large subunit of the glutamine-dependent carbamoyl phosphate synthetase (CPSase). CPSase catalyzes the formation of carbamoyl phosphate from the ammonia moiety of glutamine, carbonate, and phosphate donated by ATP, constituting the first step of 2 biosynthetic pathways, one leading to arginine and/or urea and the other to pyrimidine nucleotides. The large subunit (synthetase) binds the substrates ammonia (free or transferred from glutamine from the small subunit), hydrogencarbonate and ATP and carries out an ATP-coupled ligase reaction, activating hydrogencarbonate by forming carboxy phosphate which reacts with ammonia to form carbamoyl phosphate. This Limosilactobacillus fermentum (strain NBRC 3956 / LMG 18251) (Lactobacillus fermentum) protein is Carbamoyl phosphate synthase large chain.